Here is a 483-residue protein sequence, read N- to C-terminus: MKVLPASGLAVFLIMALKFSTAAPSLVAASPRTWRNNYRLAQAYLDKYYTNKEGHQIGEMVARGSNSMIRKIKELQAFFGLQVTGKLDQTTMNVIKKPRCGVPDVANYRLFPGEPKWKKNTLTYRISKYTPSMSSVEVDKAVEMALQAWSSAVPLSFVRINSGEADIMISFENGDHGDSYPFDGPRGTLAHAFAPGEGLGGDTHFDNAEKWTMGTNGFNLFTVAAHEFGHALGLAHSTDPSALMYPTYKYKNPYGFHLPKDDVKGIQALYGPRKVFLGKPTLPHAPHHKPSIPDLCDSSSSFDAVTMLGKELLLFKDRIFWRRQVHLRTGIRPSTITSSFPQLMSNVDAAYEVAERGTAYFFKGPHYWITRGFQMQGPPRTIYDFGFPRHVQQIDAAVYLREPQKTLFFVGDEYYSYDERKRKMEKDYPKNTEEEFSGVNGQIDAAVELNGYIYFFSGPKTYKYDTEKEDVVSVVKSSSWIGC.

Positions 1 to 22 (MKVLPASGLAVFLIMALKFSTA) are cleaved as a signal peptide. The propeptide occupies 23–107 (APSLVAASPR…PRCGVPDVAN (85 aa)). Residues 98-105 (PRCGVPDV) carry the Cysteine switch motif. C100 lines the Zn(2+) pocket. 3 residues coordinate Ca(2+): E164, A165, and D166. H176 and D178 together coordinate Zn(2+). Ca(2+)-binding residues include D183, G184, R186, and T188. Residue H191 participates in Zn(2+) binding. E197, G198, G200, and D202 together coordinate Ca(2+). Residue H204 participates in Zn(2+) binding. D206 and E209 together coordinate Ca(2+). Residue H226 participates in Zn(2+) binding. The active site involves E227. Residues H230 and H236 each coordinate Zn(2+). Hemopexin repeat units follow at residues 293-343 (PDLC…FPQL), 344-389 (MSNV…GFPR), 391-439 (VQQI…FSGV), and 440-483 (NGQI…WIGC). An intrachain disulfide couples C296 to C483.

Belongs to the peptidase M10A family. The cofactor is Zn(2+). Requires Ca(2+) as cofactor. Autoactivates at least at the 107-Asn-|-Tyr-108 site. In terms of tissue distribution, expressed specifically in the enamel organ.

Its subcellular location is the secreted. It is found in the extracellular space. The protein localises to the extracellular matrix. Functionally, degrades amelogenin, the major protein component of the enamel matrix and two of the macromolecules characterizing the cartilage extracellular matrix: aggrecan and the cartilage oligomeric matrix protein (COMP). May play a central role in tooth enamel formation. Cleaves aggrecan at the '360-Asn-|-Phe-361' site. The protein is Matrix metalloproteinase-20 (MMP20) of Homo sapiens (Human).